The following is a 255-amino-acid chain: 3-dehydroquinate dehydratase (255 aa).

3-dehydroquinate contacts are provided by residues 47–49 (EWR) and Arg83. Residue His144 is the Proton donor/acceptor of the active site. Lys171 (schiff-base intermediate with substrate) is an active-site residue. 3 residues coordinate 3-dehydroquinate: Arg214, Ser233, and Gln237.

The protein belongs to the type-I 3-dehydroquinase family. As to quaternary structure, homodimer.

It carries out the reaction 3-dehydroquinate = 3-dehydroshikimate + H2O. Its pathway is metabolic intermediate biosynthesis; chorismate biosynthesis; chorismate from D-erythrose 4-phosphate and phosphoenolpyruvate: step 3/7. In terms of biological role, involved in the third step of the chorismate pathway, which leads to the biosynthesis of aromatic amino acids. Catalyzes the cis-dehydration of 3-dehydroquinate (DHQ) and introduces the first double bond of the aromatic ring to yield 3-dehydroshikimate. This chain is 3-dehydroquinate dehydratase, found in Alkaliphilus oremlandii (strain OhILAs) (Clostridium oremlandii (strain OhILAs)).